The primary structure comprises 273 residues: Light-independent protochlorophyllide reductase iron-sulfur ATP-binding protein (273 aa).

ATP-binding positions include 12 to 17 and Lys-41; that span reads GIGKST. Ser-16 contacts Mg(2+). Residues Cys-97 and Cys-131 each coordinate [4Fe-4S] cluster. 182-183 is a binding site for ATP; that stretch reads NR.

Belongs to the NifH/BchL/ChlL family. In terms of assembly, homodimer. Protochlorophyllide reductase is composed of three subunits; BchL, BchN and BchB. It depends on [4Fe-4S] cluster as a cofactor.

The catalysed reaction is chlorophyllide a + oxidized 2[4Fe-4S]-[ferredoxin] + 2 ADP + 2 phosphate = protochlorophyllide a + reduced 2[4Fe-4S]-[ferredoxin] + 2 ATP + 2 H2O. Its pathway is porphyrin-containing compound metabolism; bacteriochlorophyll biosynthesis (light-independent). Its function is as follows. Component of the dark-operative protochlorophyllide reductase (DPOR) that uses Mg-ATP and reduced ferredoxin to reduce ring D of protochlorophyllide (Pchlide) to form chlorophyllide a (Chlide). This reaction is light-independent. The L component serves as a unique electron donor to the NB-component of the complex, and binds Mg-ATP. This is Light-independent protochlorophyllide reductase iron-sulfur ATP-binding protein from Chloroflexus aggregans (strain MD-66 / DSM 9485).